We begin with the raw amino-acid sequence, 260 residues long: Adenosylcobinamide-GDP ribazoletransferase (260 aa).

7 helical membrane-spanning segments follow: residues 31-51, 57-77, 108-128, 131-151, 173-193, 206-226, and 240-260; these read FYFLPLIGGLIAGLVLIPIYF, IEISGFISLLLYLFLTGSIHL, YGTIGLNVFLLLRYINYSTII, AGLLILAGIISRLSGLAVVVF, FFFWLVLVCFLSLFTPEIAAF, LKYLLLPLTAFILTFIIIRIS, and LIVELTELAVLSTSFFINVHL.

It belongs to the CobS family. Mg(2+) is required as a cofactor.

The protein localises to the cell inner membrane. It carries out the reaction alpha-ribazole + adenosylcob(III)inamide-GDP = adenosylcob(III)alamin + GMP + H(+). The enzyme catalyses alpha-ribazole 5'-phosphate + adenosylcob(III)inamide-GDP = adenosylcob(III)alamin 5'-phosphate + GMP + H(+). It participates in cofactor biosynthesis; adenosylcobalamin biosynthesis; adenosylcobalamin from cob(II)yrinate a,c-diamide: step 7/7. Its function is as follows. Joins adenosylcobinamide-GDP and alpha-ribazole to generate adenosylcobalamin (Ado-cobalamin). Also synthesizes adenosylcobalamin 5'-phosphate from adenosylcobinamide-GDP and alpha-ribazole 5'-phosphate. The polypeptide is Adenosylcobinamide-GDP ribazoletransferase (Treponema denticola (strain ATCC 35405 / DSM 14222 / CIP 103919 / JCM 8153 / KCTC 15104)).